A 355-amino-acid chain; its full sequence is MNTTPVHALTDIDGGIAVDPAPRLAGPPVFGGPGNDAFDLAPVRSTGREMLRFDFPGVSIGAAHYEEGPTGATVIHIPAGARTAVDARGGAVGLSGGYDFNHAICLAGGAGYGLEAGAGVSDALLERLEHRTGFAELQLVSSAVIYDFSARSTAVYPDKALGRAALEFAVPGEFPQGRAGAGMSASAGKVDWDRTEITGQGAAFRRLGDVRILAVVVPNPVGVIVDRAGTVVRGNYDAQTGVRRHPVFDYQEAFAEQVPPVTEAGNTTISAIVTNVRMSPVELNQFAKQVHSSMHRGIQPFHTDMDGDTLFAVTTDEIDLPTTPGSSRGRLSVNATALGAIASEVMWDAVLEAGK.

The active-site Nucleophile is threonine 267.

The protein belongs to the peptidase S58 family. As to quaternary structure, heterotetramer composed of 4 alpha/beta heterodimers. Exists at the monomer/dimer/trimer equilibrium in aqueous solution. In terms of processing, expressed as an inactive precursor that is cleaved autocatalytically at Asn266/Thr267 to generate an active enzyme composed of an alpha subunit and a beta subunit.

It catalyses the reaction [N-(6-aminohexanoyl)]n + H2O = [N-(6-aminohexanoyl)]n-x + [N-(6-aminohexanoyl)]x.. It functions in the pathway xenobiotic degradation; nylon-6 oligomer degradation. Functionally, involved in the degradation of nylon-6 oligomers. Degrades cyclic and linear oligomers of 6-aminohexanoate (Ahx) with a degree of polymerization greater than three by an endo-type mode. Cannot use Ahx cyclic dimer or the Ahx linear dimer. In Paenarthrobacter ureafaciens, this protein is 6-aminohexanoate-oligomer endohydrolase.